Reading from the N-terminus, the 169-residue chain is MRWFFFLLLSVIGLDRFTKQLAIIFLRDTGESITIIPGLFSLTYAENRGIAFGMEFLPPGVLLILTTIIVSGVIIYALYQGNRQPLFLGSFGLIAGGGIGNLIDRFTTGRVVDFLYFDLYRGELFGQWIALWPIFNIADSAITIGACMLIIFYGRIFPDSTASGGNNVC.

Transmembrane regions (helical) follow at residues 56–76 (FLPPGVLLILTTIIVSGVIIY) and 84–104 (QPLFLGSFGLIAGGGIGNLID). Catalysis depends on residues Asp113 and Asp139. Residues 132 to 152 (WPIFNIADSAITIGACMLIIF) traverse the membrane as a helical segment.

It belongs to the peptidase A8 family.

It is found in the cell inner membrane. It catalyses the reaction Release of signal peptides from bacterial membrane prolipoproteins. Hydrolyzes -Xaa-Yaa-Zaa-|-(S,diacylglyceryl)Cys-, in which Xaa is hydrophobic (preferably Leu), and Yaa (Ala or Ser) and Zaa (Gly or Ala) have small, neutral side chains.. It functions in the pathway protein modification; lipoprotein biosynthesis (signal peptide cleavage). Its function is as follows. This protein specifically catalyzes the removal of signal peptides from prolipoproteins. This is Lipoprotein signal peptidase from Chlorobium phaeovibrioides (strain DSM 265 / 1930) (Prosthecochloris vibrioformis (strain DSM 265)).